Consider the following 149-residue polypeptide: MKTNVIIDGDACPVVNSVIELTKGTGIFVTILRSFSHFSQQIQPEHVKIVYVDDGPDAVDYKIVELASNNDIVITQDYGLASLLIDKVHTVMHHKGNIYHSNNIQSLLDQRYLNAQIRRRGGRHKGPPPFTTEDRLKFEHAFRKIINQI.

Belongs to the UPF0178 family.

The sequence is that of UPF0178 protein SE_0451 from Staphylococcus epidermidis (strain ATCC 12228 / FDA PCI 1200).